Reading from the N-terminus, the 702-residue chain is Ribosomal RNA large subunit methyltransferase K/L (702 aa).

In terms of domain architecture, THUMP spans 43-154 (LVYQSLMWSR…KETASIALDL (112 aa)).

The protein belongs to the methyltransferase superfamily. RlmKL family.

Its subcellular location is the cytoplasm. It catalyses the reaction guanosine(2445) in 23S rRNA + S-adenosyl-L-methionine = N(2)-methylguanosine(2445) in 23S rRNA + S-adenosyl-L-homocysteine + H(+). The catalysed reaction is guanosine(2069) in 23S rRNA + S-adenosyl-L-methionine = N(2)-methylguanosine(2069) in 23S rRNA + S-adenosyl-L-homocysteine + H(+). Functionally, specifically methylates the guanine in position 2445 (m2G2445) and the guanine in position 2069 (m7G2069) of 23S rRNA. The polypeptide is Ribosomal RNA large subunit methyltransferase K/L (Escherichia coli O6:K15:H31 (strain 536 / UPEC)).